The following is a 314-amino-acid chain: Endo-beta-N-acetylglucosaminidase (314 aa).

The first 47 residues, 1–47 (MQFGIVAAIADGGRTARAGGSVRPPRRPPASHTAWGLPRGRPTGQPH), serve as a signal peptide directing secretion. The segment at 14 to 54 (RTARAGGSVRPPRRPPASHTAWGLPRGRPTGQPHATPTKSG) is disordered. The region spanning 55–309 (PTSIAYVEVN…SSMTKVLYGQ (255 aa)) is the GH18 domain. Glu175 serves as the catalytic Proton donor.

Belongs to the glycosyl hydrolase 18 family. As to quaternary structure, monomer.

Its subcellular location is the secreted. It catalyses the reaction an N(4)-(oligosaccharide-(1-&gt;3)-[oligosaccharide-(1-&gt;6)]-beta-D-Man-(1-&gt;4)-beta-D-GlcNAc-(1-&gt;4)-alpha-D-GlcNAc)-L-asparaginyl-[protein] + H2O = an oligosaccharide-(1-&gt;3)-[oligosaccharide-(1-&gt;6)]-beta-D-Man-(1-&gt;4)-D-GlcNAc + N(4)-(N-acetyl-beta-D-glucosaminyl)-L-asparaginyl-[protein]. Its function is as follows. Cleaves asparagine-linked oligomannose and hybrid, but not complex, oligosaccharides from glycoproteins. The protein is Endo-beta-N-acetylglucosaminidase of Flavobacterium sp. (strain SK1022).